Consider the following 1358-residue polypeptide: Retrotransposon-like protein 1 (1358 aa).

Disordered regions lie at residues 1-159 (MIEP…TEHS) and 563-616 (ADVF…TAPW). The span at 19–30 (SSKQMESSEGSS) shows a compositional bias: low complexity. Positions 65-79 (EMEELPTDLLQDMEE) are enriched in acidic residues. Residues 131–149 (AREEQEAHTDLKESGREET) show a composition bias toward basic and acidic residues. The span at 583 to 592 (GSDDLSESEP) shows a compositional bias: acidic residues. 2 helical membrane-spanning segments follow: residues 1083-1099 (LLYW…LVLL) and 1126-1146 (LILD…TQLL). Disordered stretches follow at residues 1250-1283 (DGLQ…PRHL) and 1338-1358 (QPRE…ANLD). Low complexity predominate over residues 1267–1276 (APPSHTAATH). Residues 1338–1347 (QPREQARLEE) show a composition bias toward basic and acidic residues. A compositionally biased stretch (acidic residues) spans 1348 to 1358 (LPDEDEDANLD).

It is found in the membrane. In terms of biological role, plays an essential role in capillaries endothelial cells for the maintenance of feto-maternal interface and for development of the placenta. The protein is Retrotransposon-like protein 1 (RTL1) of Homo sapiens (Human).